The primary structure comprises 68 residues: Phylloseptin-SP1 (68 aa).

An N-terminal signal peptide occupies residues 1–22 (MAFLKKSLFLVLFLGLVSLSIC). Positions 23 to 45 (EEKERETKEEENEQEDDNREEKR) are excised as a propeptide. L67 is subject to Leucine amide.

As to expression, expressed by the skin glands.

It localises to the secreted. Its function is as follows. Weak cationic amphipathic alpha-helical antimicrobial peptide with weak activity against Gram-positive and Gram-negative bacteria and fungi. Has been tested against E.coli (MIC&gt;217.69 uM), S.aureus (MIC&gt;217.69 uM), K.pneumoniae (MIC&gt;189.00 uM) and C.albicans (MIC&gt;217.69 uM). Shows a moderate hemolytic activity. This Agalychnis spurrelli (Gliding leaf frog) protein is Phylloseptin-SP1.